The sequence spans 444 residues: Histidinol dehydrogenase (444 aa).

NAD(+) is bound by residues Tyr135, Gln199, and Asn227. Substrate contacts are provided by Thr250, Gln272, and His275. Residues Gln272 and His275 each contribute to the Zn(2+) site. Active-site proton acceptor residues include Glu341 and His342. Positions 342, 375, 429, and 434 each coordinate substrate. Asp375 lines the Zn(2+) pocket. A Zn(2+)-binding site is contributed by His434.

This sequence belongs to the histidinol dehydrogenase family. Requires Zn(2+) as cofactor.

The catalysed reaction is L-histidinol + 2 NAD(+) + H2O = L-histidine + 2 NADH + 3 H(+). It participates in amino-acid biosynthesis; L-histidine biosynthesis; L-histidine from 5-phospho-alpha-D-ribose 1-diphosphate: step 9/9. Functionally, catalyzes the sequential NAD-dependent oxidations of L-histidinol to L-histidinaldehyde and then to L-histidine. The sequence is that of Histidinol dehydrogenase (hisD) from Mycobacterium bovis (strain ATCC BAA-935 / AF2122/97).